Here is a 195-residue protein sequence, read N- to C-terminus: Molybdopterin synthase catalytic subunit (195 aa).

The interval 1–37 (MSARPEPQPGSERNATEPLPSHLDPTTYPRTLTTTHG) is disordered. Residues 25-37 (PTTYPRTLTTTHG) are compositionally biased toward low complexity. Residues 141 to 142 (HR), Lys157, and 164 to 166 (KRE) contribute to the substrate site.

It belongs to the MoaE family. MOCS2B subfamily. In terms of assembly, heterotetramer; composed of 2 small (MOCS2A) and 2 large (MOCS2B) subunits.

It is found in the cytoplasm. The catalysed reaction is 2 [molybdopterin-synthase sulfur-carrier protein]-C-terminal-Gly-aminoethanethioate + cyclic pyranopterin phosphate + H2O = molybdopterin + 2 [molybdopterin-synthase sulfur-carrier protein]-C-terminal Gly-Gly + 2 H(+). It participates in cofactor biosynthesis; molybdopterin biosynthesis. In terms of biological role, catalytic subunit of the molybdopterin synthase complex, a complex that catalyzes the conversion of precursor Z into molybdopterin. Acts by mediating the incorporation of 2 sulfur atoms from thiocarboxylated MOCS2A into precursor Z to generate a dithiolene group. The protein is Molybdopterin synthase catalytic subunit of Emericella nidulans (strain FGSC A4 / ATCC 38163 / CBS 112.46 / NRRL 194 / M139) (Aspergillus nidulans).